Reading from the N-terminus, the 626-residue chain is UvrABC system protein C (626 aa).

Positions 26–105 constitute a GIY-YIG domain; it reads QEPGVYFMGD…IKQHQPHFNV (80 aa). A UVR domain is found at 215–250; it reads QELHQLLTQQMEKAAADLKFEQAALIRDQINSLGKL.

The protein belongs to the UvrC family. As to quaternary structure, interacts with UvrB in an incision complex.

It localises to the cytoplasm. Functionally, the UvrABC repair system catalyzes the recognition and processing of DNA lesions. UvrC both incises the 5' and 3' sides of the lesion. The N-terminal half is responsible for the 3' incision and the C-terminal half is responsible for the 5' incision. This Synechocystis sp. (strain ATCC 27184 / PCC 6803 / Kazusa) protein is UvrABC system protein C.